The following is a 267-amino-acid chain: Probable ribose-5-phosphate isomerase 1 (267 aa).

Gly2 is modified (N-acetylglycine). Residue Ser92 is modified to Phosphoserine.

This sequence belongs to the ribose 5-phosphate isomerase family. Expressed in roots, cotyledons, leaves and flowers.

It localises to the cytoplasm. It catalyses the reaction aldehydo-D-ribose 5-phosphate = D-ribulose 5-phosphate. It functions in the pathway carbohydrate degradation; pentose phosphate pathway; D-ribose 5-phosphate from D-ribulose 5-phosphate (non-oxidative stage): step 1/1. Its function is as follows. Catalyzes the reversible conversion of ribose-5-phosphate to ribulose 5-phosphate. This Arabidopsis thaliana (Mouse-ear cress) protein is Probable ribose-5-phosphate isomerase 1 (RPI1).